The following is a 99-amino-acid chain: Plastocyanin (99 aa).

The Plastocyanin-like domain occupies 1–99; the sequence is IEVLLGGDDG…AGMVGKVTVN (99 aa). Cu cation-binding residues include His-37, Cys-84, His-87, and Met-92.

This sequence belongs to the plastocyanin family. Cu(2+) is required as a cofactor.

It is found in the plastid. Its subcellular location is the chloroplast thylakoid membrane. Functionally, participates in electron transfer between P700 and the cytochrome b6-f complex in photosystem I. In Cucurbita pepo (Vegetable marrow), this protein is Plastocyanin (PETE).